We begin with the raw amino-acid sequence, 86 residues long: UPF0457 protein SAUSA300_2132 (86 aa).

Belongs to the UPF0457 family.

The chain is UPF0457 protein SAUSA300_2132 from Staphylococcus aureus (strain USA300).